Here is a 156-residue protein sequence, read N- to C-terminus: Small ribosomal subunit protein uS7 (156 aa).

It belongs to the universal ribosomal protein uS7 family. As to quaternary structure, part of the 30S ribosomal subunit. Contacts proteins S9 and S11.

One of the primary rRNA binding proteins, it binds directly to 16S rRNA where it nucleates assembly of the head domain of the 30S subunit. Is located at the subunit interface close to the decoding center, probably blocks exit of the E-site tRNA. The chain is Small ribosomal subunit protein uS7 from Kineococcus radiotolerans (strain ATCC BAA-149 / DSM 14245 / SRS30216).